A 474-amino-acid polypeptide reads, in one-letter code: Ribosomal protein uS12 methylthiotransferase RimO (474 aa).

The MTTase N-terminal domain maps to 37-147 (NRIGFVSLGC…VLNHVHKYVP (111 aa)). 6 residues coordinate [4Fe-4S] cluster: Cys46, Cys82, Cys111, Cys179, Cys183, and Cys186. The 238-residue stretch at 165-402 (LTPKHYAYLK…MEVQAEISAE (238 aa)) folds into the Radical SAM core domain. Residues 405 to 471 (ARLVGRELDI…EHDLWAELVA (67 aa)) form the TRAM domain.

The protein belongs to the methylthiotransferase family. RimO subfamily. Requires [4Fe-4S] cluster as cofactor.

Its subcellular location is the cytoplasm. The enzyme catalyses L-aspartate(89)-[ribosomal protein uS12]-hydrogen + (sulfur carrier)-SH + AH2 + 2 S-adenosyl-L-methionine = 3-methylsulfanyl-L-aspartate(89)-[ribosomal protein uS12]-hydrogen + (sulfur carrier)-H + 5'-deoxyadenosine + L-methionine + A + S-adenosyl-L-homocysteine + 2 H(+). Functionally, catalyzes the methylthiolation of an aspartic acid residue of ribosomal protein uS12. This is Ribosomal protein uS12 methylthiotransferase RimO from Shewanella amazonensis (strain ATCC BAA-1098 / SB2B).